A 180-amino-acid polypeptide reads, in one-letter code: Chromatin structure-remodeling complex protein RSC14 (180 aa).

As to quaternary structure, interacts with STH1, RSC3 and ARP9. Component of the two forms of the RSC complex composed of at least either RSC1 or RSC2, and ARP7, ARP9, LDB7, NPL6, RSC3, RSC30, RSC4, RSC58, RSC6, RSC8, RSC9, SFH1, STH1, HTL1 and probably RTT102. The complexes interact with histone and histone variant components of centromeric chromatin. Component of a fungal-specific module (HTL1-LDB7-NPL6-RSC3-RSC30) within the RSC complex.

It localises to the nucleus. In terms of biological role, component of the chromatin structure-remodeling complex (RSC), which is involved in transcription regulation and nucleosome positioning. RSC is responsible for the transfer of a histone octamer from a nucleosome core particle to naked DNA. The reaction requires ATP and involves an activated RSC-nucleosome intermediate. Remodeling reaction also involves DNA translocation, DNA twist and conformational change. As a reconfigurer of centromeric and flanking nucleosomes, RSC complex is required both for proper kinetochore function in chromosome segregation and, via a PKC1-dependent signaling pathway, for organization of the cellular cytoskeleton. Together with HTL1, NPL6, RSC3, RSC30 components, defines a fungal-specific module within the RSC complex that plays a role in many cellular functions including the maintenance of cell wall integrity. May be involved in the transfer of mannosylphosphate (MP) groups into N-linked oligosaccharides. This is Chromatin structure-remodeling complex protein RSC14 (LDB7) from Saccharomyces cerevisiae (strain ATCC 204508 / S288c) (Baker's yeast).